A 510-amino-acid polypeptide reads, in one-letter code: MRLLPQTNRILLPTTSSTACGANQLRMSSEKAVPCYEESVRLLNGLQSNAATIKKLRVQRENLQAINLPQCRKYLESLNISAEDLNALNIIHVSGTKGKGSACAFVESILRSQGLRTGFYSSPHLVHVRERIQVDGQPVSEQMFAEEFFHVYDIIKREHSDNMPAYFKFLTLLAFRIFVKLNVQVMILEVGIGGEYDCTNVVEKPKVCGVTTLDYDHMSILGNKLSEIAWHKAGIFKESVPAFYSPTTTEAEEVLIARAISKHVPLFQTPPVSAYQFARDISPGIRGAHQFSNVSMALQLVRAWAEKCGFPLPGVPLSTDTSGFNVPLWMCDAIESCRWPGRSQIVSTDRNVTYLLDGAHTPKSMEACSEWAAEEIVNLKKENVKKILLFQCTADRCPSTLIKYLKPLGISQIVSCPTQLHSSIDKSADSANLNASRDEQAEKANQCVQAWKESLDQPESVTEDQMKVFDCISSAYKFIESQAASQEILVLVTGSLHLVGGVLNLAGKGK.

98-101 is a binding site for ATP; sequence GKGS. Ser-122, Glu-189, and His-217 together coordinate Mg(2+). The ATP site is built by Arg-342 and Asp-357.

It belongs to the folylpolyglutamate synthase family. A monovalent cation serves as cofactor.

It localises to the mitochondrion inner membrane. The protein resides in the mitochondrion matrix. It is found in the cytoplasm. It catalyses the reaction (6S)-5,6,7,8-tetrahydrofolyl-(gamma-L-Glu)(n) + L-glutamate + ATP = (6S)-5,6,7,8-tetrahydrofolyl-(gamma-L-Glu)(n+1) + ADP + phosphate + H(+). Its pathway is cofactor biosynthesis; tetrahydrofolylpolyglutamate biosynthesis. Functionally, catalyzes conversion of folates to polyglutamate derivatives allowing concentration of folate compounds in the cell and the intracellular retention of these cofactors, which are important substrates for most of the folate-dependent enzymes that are involved in one-carbon transfer reactions involved in purine, pyrimidine and amino acid synthesis. The sequence is that of Putative folylpolyglutamate synthase from Caenorhabditis elegans.